The sequence spans 430 residues: MKILVAGGGGREHAICLALTKNANVELYSVMGKKNPGIAKIARESFIHAETDVPAVLAFAKEHNIQYAVVGPEAPLEAGLVDALTKAGIGCVGPVKAAARIETDKGFCRGLMNKYGIDGCPAYKLCNTPKEAAEFIREYPGDLAVKPTGLTGGKGVKVMGEQVDREGAVEYAMTLKDQVIILEERLLGEEFTLMAFVDGKHLVPMPLVQDHKRAFEGDVGPNTGGMGSYSLENHKFPFVTEDDYAKAISIMQATIDALAQEGSPYKGILYGQFMNTKTGPKVIEFNARFGDPEAMNVLSILTSDFLTIAEHIINGTLSANDVSFEEKATVCKYIVPMDYPDKPHAGDVITVGPAENTILYYANIALENGVLMTLTSRTMAYVGIGASLAEAEKYAEAACRNVSGNVRYRSDIGTEALFAKRIAHMKELRS.

Residues 109 to 314 (RGLMNKYGID…FLTIAEHIIN (206 aa)) form the ATP-grasp domain. An ATP-binding site is contributed by 136 to 192 (IREYPGDLAVKPTGLTGGKGVKVMGEQVDREGAVEYAMTLKDQVIILEERLLGEEFT). Mg(2+) contacts are provided by Gln272, Glu284, and Asn286. 3 residues coordinate Mn(2+): Gln272, Glu284, and Asn286.

This sequence belongs to the GARS family. It depends on Mg(2+) as a cofactor. The cofactor is Mn(2+).

The catalysed reaction is 5-phospho-beta-D-ribosylamine + glycine + ATP = N(1)-(5-phospho-beta-D-ribosyl)glycinamide + ADP + phosphate + H(+). The protein operates within purine metabolism; IMP biosynthesis via de novo pathway; N(1)-(5-phospho-D-ribosyl)glycinamide from 5-phospho-alpha-D-ribose 1-diphosphate: step 2/2. This chain is Phosphoribosylamine--glycine ligase, found in Methanocorpusculum labreanum (strain ATCC 43576 / DSM 4855 / Z).